The primary structure comprises 540 residues: Chaperonin GroEL (540 aa).

Residues 29-32 (TLGP), 86-90 (DGTTT), G413, and D495 contribute to the ATP site.

The protein belongs to the chaperonin (HSP60) family. Forms a cylinder of 14 subunits composed of two heptameric rings stacked back-to-back. Interacts with the co-chaperonin GroES.

The protein localises to the cytoplasm. It catalyses the reaction ATP + H2O + a folded polypeptide = ADP + phosphate + an unfolded polypeptide.. In terms of biological role, together with its co-chaperonin GroES, plays an essential role in assisting protein folding. The GroEL-GroES system forms a nano-cage that allows encapsulation of the non-native substrate proteins and provides a physical environment optimized to promote and accelerate protein folding. The protein is Chaperonin GroEL of Caldanaerobacter subterraneus subsp. tengcongensis (strain DSM 15242 / JCM 11007 / NBRC 100824 / MB4) (Thermoanaerobacter tengcongensis).